Reading from the N-terminus, the 183-residue chain is NADH dehydrogenase [ubiquinone] iron-sulfur protein 4, mitochondrial (183 aa).

Residues 1 to 28 constitute a mitochondrion transit peptide; the sequence is MSALRQVMCRSTASLQLYQANRAAAARW. Position 181 is a phosphoserine (serine 181).

Belongs to the complex I NDUFS4 subunit family.

It localises to the mitochondrion inner membrane. Functionally, accessory subunit of the mitochondrial membrane respiratory chain NADH dehydrogenase (Complex I), that is believed not to be involved in catalysis. Complex I functions in the transfer of electrons from NADH to the respiratory chain. The immediate electron acceptor for the enzyme is believed to be ubiquinone. The sequence is that of NADH dehydrogenase [ubiquinone] iron-sulfur protein 4, mitochondrial from Drosophila melanogaster (Fruit fly).